The chain runs to 216 residues: Putative ripening-related protein 4 (216 aa).

Positions 1 to 25 (MAANVKVLVVLALLQLMSLHAVVHG) are cleaved as a signal peptide.

It belongs to the kiwellin family.

It is found in the secreted. The protein is Putative ripening-related protein 4 of Oryza sativa subsp. japonica (Rice).